The chain runs to 873 residues: Protein SEY1 (873 aa).

The Cytoplasmic segment spans residues 1-750; that stretch reads MVANGHFFAG…KRSAIGGITQ (750 aa). In terms of domain architecture, GB1/RHD3-type G spans 50 to 308; sequence GFNYHLISVF…IPADGFAVYA (259 aa). 60 to 67 serves as a coordination point for GTP; it reads GSQSTGKS. The tract at residues 677-701 is disordered; it reads LDKWIGHTPSSATPADEEDLTPIGG. Residues 691-701 are compositionally biased toward acidic residues; the sequence is ADEEDLTPIGG. Residues 751 to 771 traverse the membrane as a helical segment; it reads VPLYFYGLLLALGWNEIVAVL. Over 772–774 the chain is Lumenal; that stretch reads RNP. The helical transmembrane segment at 775-795 threads the bilayer; sequence AYFLLLFVCAVTAYVTYQLNL. Over 796–873 the chain is Cytoplasmic; it reads WGPIIKMTEA…IDDADDDDDF (78 aa). Residues 841–873 form a disordered region; sequence EGYDMSNMKNRKSAGGYQNNRSHIDDADDDDDF.

The protein belongs to the TRAFAC class dynamin-like GTPase superfamily. GB1/RHD3 GTPase family. RHD3 subfamily.

It localises to the endoplasmic reticulum membrane. In terms of biological role, cooperates with the reticulon proteins and tubule-shaping DP1 family proteins to generate and maintain the structure of the tubular endoplasmic reticulum network. Has GTPase activity, which is required for its function in ER organization. This is Protein SEY1 from Paracoccidioides lutzii (strain ATCC MYA-826 / Pb01) (Paracoccidioides brasiliensis).